Consider the following 516-residue polypeptide: GMP synthase [glutamine-hydrolyzing] (516 aa).

One can recognise a Glutamine amidotransferase type-1 domain in the interval 8-198 (KILILDFGSQ…VVNICGCDTL (191 aa)). Catalysis depends on C84, which acts as the Nucleophile. Catalysis depends on residues H172 and E174. Positions 199 to 391 (WNIENIIEND…LGLPYNMLYR (193 aa)) constitute a GMPS ATP-PPase domain. ATP is bound at residue 226 to 232 (SGGVDSS).

As to quaternary structure, homodimer.

The enzyme catalyses XMP + L-glutamine + ATP + H2O = GMP + L-glutamate + AMP + diphosphate + 2 H(+). The protein operates within purine metabolism; GMP biosynthesis; GMP from XMP (L-Gln route): step 1/1. Its function is as follows. Catalyzes the synthesis of GMP from XMP. The chain is GMP synthase [glutamine-hydrolyzing] from Francisella tularensis subsp. mediasiatica (strain FSC147).